We begin with the raw amino-acid sequence, 342 residues long: MAVTAAQVKELREKTGAGIMDAKRALVETDGNMEAAAELLREKGIAKAAKKADRVAAEGLTGIAVNGNVAAIVELNSETDFVAKNDQFVALVKETAELIASKKPATNEEALALETASGITLEAELVQATATIGEKITFRRFAVIEKTDAQHFGAYQHNGGKIGVVSVVEGADETLAKQVSMHIAAMNPTVLSADELDSEFVKAELAQMNHKIDEDNASRVLVNKPELPHHEFGSKSQLTEEVLAAAKASFEEELKAEGKPEKIWDKILPGKMAKFIVDNTKVDQQFALLAQLYIMDDSKTVEAFLESKGAKAIAFTRFEVGEGIEKAETDFAAEVEAAKAGL.

The tract at residues 79 to 82 (TDFV) is involved in Mg(2+) ion dislocation from EF-Tu.

This sequence belongs to the EF-Ts family.

It localises to the cytoplasm. Its function is as follows. Associates with the EF-Tu.GDP complex and induces the exchange of GDP to GTP. It remains bound to the aminoacyl-tRNA.EF-Tu.GTP complex up to the GTP hydrolysis stage on the ribosome. The protein is Elongation factor Ts (tsf) of Lactococcus lactis subsp. lactis (strain IL1403) (Streptococcus lactis).